The following is a 333-amino-acid chain: Glutamyl endopeptidase (333 aa).

The first 29 residues, 1–29 (MKGKFLKVSSLFVATLTTATLVSSPAANA), serve as a signal peptide directing secretion. A propeptide spanning residues 30-68 (LSSKAMDNHPQQSQSSKQQTPKIQKGGNLKPLEQREHAN) is cleaved from the precursor. The interval 33 to 61 (KAMDNHPQQSQSSKQQTPKIQKGGNLKPL) is disordered. Residues 40-54 (QQSQSSKQQTPKIQK) are compositionally biased toward low complexity. Catalysis depends on charge relay system residues H119, D161, and S237. The segment at 283–333 (FANDDQPNNPDNPDNPNNPDNPNNPDNPNNPNNPDNPDNGDNNNSDNPDAA) is disordered. The segment covering 286–333 (DDQPNNPDNPDNPNNPDNPNNPDNPNNPNNPDNPDNGDNNNSDNPDAA) has biased composition (low complexity). Tandem repeats lie at residues 289–291 (PNN), 292–294 (PDN), 295–297 (PDN), 298–300 (PNN), 301–303 (PDN), 304–306 (PNN), 307–309 (PDN), 310–312 (PNN), 313–315 (PNN), 316–318 (PDN), and 319–321 (PDN). The tract at residues 289 to 321 (PNNPDNPDNPNNPDNPNNPDNPNNPNNPDNPDN) is 11 X 3 AA repeats of P-[DN]-N.

It belongs to the peptidase S1B family. Post-translationally, proteolytically cleaved by aureolysin (aur). This cleavage leads to the activation of SspA.

Its subcellular location is the secreted. The catalysed reaction is Preferential cleavage: Glu-|-Xaa, Asp-|-Xaa.. Functionally, preferentially cleaves peptide bonds on the carboxyl-terminal side of aspartate and glutamate. Along with other extracellular proteases it is involved in colonization and infection of human tissues. Required for proteolytic maturation of thiol protease SspB and inactivation of SspC, an inhibitor of SspB. It is the most important protease for degradation of fibronectin-binding protein (FnBP) and surface protein A, which are involved in adherence to host cells. May also protect bacteria against host defense mechanism by cleaving the immunoglobulin classes IgG, IgA and IgM. May be involved in the stability of secreted lipases. This is Glutamyl endopeptidase (sspA) from Staphylococcus aureus (strain MSSA476).